The chain runs to 372 residues: N-methyl-L-tryptophan oxidase (372 aa).

Residue 4-34 (DLIIIGSGSVGAAAGYYATRAGLKVLMTDAH) participates in FAD binding. Position 307 is an S-8alpha-FAD cysteine (Cys-307).

The protein belongs to the MSOX/MTOX family. MTOX subfamily. Monomer. FAD is required as a cofactor.

The catalysed reaction is N(alpha)-methyl-L-tryptophan + O2 + H2O = L-tryptophan + formaldehyde + H2O2. Functionally, catalyzes the oxidative demethylation of N-methyl-L-tryptophan. The protein is N-methyl-L-tryptophan oxidase of Citrobacter koseri (strain ATCC BAA-895 / CDC 4225-83 / SGSC4696).